The following is a 256-amino-acid chain: Transcription factor CAULIFLOWER (256 aa).

Residues methionine 1–serine 61 form the MADS-box domain. Residues glutamine 90 to isoleucine 180 enclose the K-box domain.

Homodimer capable of binding to CArG-box sequences.

The protein localises to the nucleus. Probable transcription factor that promotes early floral meristem identity in synergy with APETALA1, FRUITFULL and LEAFY. Is required subsequently for the transition of an inflorescence meristem into a floral meristem. Seems to be partially redundant to the function of APETALA1. The chain is Transcription factor CAULIFLOWER (CAL) from Arabidopsis lyrata subsp. lyrata (Lyre-leaved rock-cress).